Here is a 355-residue protein sequence, read N- to C-terminus: Erythronate-4-phosphate dehydrogenase (355 aa).

Positions 45 and 66 each coordinate substrate. Asp146 is an NAD(+) binding site. Arg206 is a catalytic residue. Asp229 provides a ligand contact to NAD(+). Residue Glu234 is part of the active site. His251 (proton donor) is an active-site residue. Residue Gly254 coordinates NAD(+). Tyr255 is a substrate binding site.

Belongs to the D-isomer specific 2-hydroxyacid dehydrogenase family. PdxB subfamily. In terms of assembly, homodimer.

The protein resides in the cytoplasm. It catalyses the reaction 4-phospho-D-erythronate + NAD(+) = (R)-3-hydroxy-2-oxo-4-phosphooxybutanoate + NADH + H(+). It participates in cofactor biosynthesis; pyridoxine 5'-phosphate biosynthesis; pyridoxine 5'-phosphate from D-erythrose 4-phosphate: step 2/5. In terms of biological role, catalyzes the oxidation of erythronate-4-phosphate to 3-hydroxy-2-oxo-4-phosphonooxybutanoate. This chain is Erythronate-4-phosphate dehydrogenase, found in Acinetobacter baumannii (strain SDF).